Reading from the N-terminus, the 714-residue chain is Glycine--tRNA ligase beta subunit (714 aa).

It belongs to the class-II aminoacyl-tRNA synthetase family. In terms of assembly, tetramer of two alpha and two beta subunits.

The protein localises to the cytoplasm. It carries out the reaction tRNA(Gly) + glycine + ATP = glycyl-tRNA(Gly) + AMP + diphosphate. The sequence is that of Glycine--tRNA ligase beta subunit from Rhodospirillum centenum (strain ATCC 51521 / SW).